The primary structure comprises 208 residues: Fibroblast growth factor-binding protein 2 (208 aa).

The N-terminal stretch at 1–19 (MKRVALLFLVVICGMGGLG) is a signal peptide. Disulfide bonds link Cys-43–Cys-59, Cys-68–Cys-102, and Cys-77–Cys-113. The interval 130–181 (EPEDGANRDKSSQKTSASVRGAGKSSVKKTGKPAVLPRIKPTQHGQGSENET) is disordered. Cys-191 and Cys-199 are joined by a disulfide.

Belongs to the fibroblast growth factor-binding protein family.

The protein resides in the secreted. Its subcellular location is the extracellular space. The protein is Fibroblast growth factor-binding protein 2 (FGFBP2) of Gallus gallus (Chicken).